Reading from the N-terminus, the 292-residue chain is E3 ubiquitin-protein ligase trim-21 (292 aa).

The segment at 6–52 (CEICDDDFSSEEDGDHNPRNLKCSHTLCEGCIKKLLKNGRVVCPFCR) adopts an RING-type zinc-finger fold. The B box-type zinc-finger motif lies at 90 to 137 (NFPPKCVEHPYNVAEFACIESNCSSKNKLMCQTCEEFGAHKGHAKELL). Residues Cys-95, His-98, Cys-123, and His-129 each contribute to the Zn(2+) site. A coiled-coil region spans residues 152–179 (INQLKLNIQNCTVKKNELEEAVVKSEQL).

It belongs to the TRIM/RBCC family. As to quaternary structure, interacts with E2 ubiquitin-conjugating enzyme ubc-21. Interacts with ced-6; this mediates interaction of trim-21 with ced-1 and is required for ced-1 ubiquitination. Interacts with nck-1; the interaction is required for ced-1 ubiquitination. As to expression, in early larva, observed mainly in pharyngeal and body wall muscle cells.

It localises to the cytoplasm. The catalysed reaction is S-ubiquitinyl-[E2 ubiquitin-conjugating enzyme]-L-cysteine + [acceptor protein]-L-lysine = [E2 ubiquitin-conjugating enzyme]-L-cysteine + N(6)-ubiquitinyl-[acceptor protein]-L-lysine.. Its pathway is protein modification; protein ubiquitination. In terms of biological role, E3 ubiquitin-protein ligase which catalyzes 'Lys-48'-linked polyubiquitination of ced-1, promoting its proteasomal degradation to maintain appropriate ced-1 levels for apoptotic cell clearance. Acts together with E2 ubiquitin-conjugating enzyme ubc-21. The polypeptide is E3 ubiquitin-protein ligase trim-21 (Caenorhabditis elegans).